We begin with the raw amino-acid sequence, 123 residues long: Small ribosomal subunit protein uS12 (123 aa).

3-methylthioaspartic acid is present on D89. Residues 104–123 (TAGVKDRKQARSKYGAKRPK) are disordered. The span at 113-123 (ARSKYGAKRPK) shows a compositional bias: basic residues.

This sequence belongs to the universal ribosomal protein uS12 family. In terms of assembly, part of the 30S ribosomal subunit. Contacts proteins S8 and S17. May interact with IF1 in the 30S initiation complex.

With S4 and S5 plays an important role in translational accuracy. In terms of biological role, interacts with and stabilizes bases of the 16S rRNA that are involved in tRNA selection in the A site and with the mRNA backbone. Located at the interface of the 30S and 50S subunits, it traverses the body of the 30S subunit contacting proteins on the other side and probably holding the rRNA structure together. The combined cluster of proteins S8, S12 and S17 appears to hold together the shoulder and platform of the 30S subunit. This chain is Small ribosomal subunit protein uS12, found in Neisseria gonorrhoeae (strain ATCC 700825 / FA 1090).